The primary structure comprises 410 residues: F-box protein At3g19890 (410 aa).

One can recognise an F-box domain in the interval 2 to 49; sequence TMISDLSKDLVEEILSKAPITSLGAVRSTHKQWNALSKGRLLYKAEAK. A disordered region spans residues 386–410; sequence EDKCKSIKMVDTKRQRKKRKRKSKR. Positions 387-398 are enriched in basic and acidic residues; the sequence is DKCKSIKMVDTK. The span at 399 to 410 shows a compositional bias: basic residues; it reads RQRKKRKRKSKR.

This is F-box protein At3g19890 from Arabidopsis thaliana (Mouse-ear cress).